The sequence spans 1392 residues: ATP-dependent helicase/nuclease subunit A (1392 aa).

Positions 3–489 constitute a UvrD-like helicase ATP-binding domain; sequence NPKWTPAQQA…IDLNQNFRSR (487 aa). 24 to 31 serves as a coordination point for ATP; the sequence is AAAGSGKT. Disordered stretches follow at residues 291–319, 555–594, and 1051–1126; these read RGSK…KARD, KRGA…LEEA, and GPVQ…LDTK. 2 stretches are compositionally biased toward basic and acidic residues: residues 305–319 and 567–583; these read ENSK…KARD and SPAK…REPE. The region spanning 556–886 is the UvrD-like helicase C-terminal domain; that stretch reads RGAEDAATEV…RFITVHSSKG (331 aa). Over residues 584–594 the composition is skewed to acidic residues; the sequence is SGDDESSLEEA. The segment covering 1088–1113 has biased composition (basic and acidic residues); it reads ASGKTEIPGETKNSEETKTSEDKKNL.

The protein belongs to the helicase family. AddA subfamily. In terms of assembly, heterodimer of AddA and AddB/RexB. The cofactor is Mg(2+).

The catalysed reaction is Couples ATP hydrolysis with the unwinding of duplex DNA by translocating in the 3'-5' direction.. It catalyses the reaction ATP + H2O = ADP + phosphate + H(+). The heterodimer acts as both an ATP-dependent DNA helicase and an ATP-dependent, dual-direction single-stranded exonuclease. Recognizes the chi site generating a DNA molecule suitable for the initiation of homologous recombination. The AddA nuclease domain is required for chi fragment generation; this subunit has the helicase and 3' -&gt; 5' nuclease activities. The chain is ATP-dependent helicase/nuclease subunit A from Desulfitobacterium hafniense (strain DSM 10664 / DCB-2).